We begin with the raw amino-acid sequence, 181 residues long: Transmembrane protein 47 (181 aa).

A2 carries the post-translational modification N-acetylalanine. The next 4 helical transmembrane spans lie at 21-41 (LVGL…VLSP), 83-103 (ALLL…LISI), 115-135 (VAVM…LYPI), and 152-172 (GYGL…LYCL).

The protein belongs to the TMEM47 family. Interacts with CTNNB1, CTNNA1, PRKCI, PARD6B, FYB1. In terms of tissue distribution, expressed in adult brain, fetal brain, cerebellum, heart, lung, prostate and thyroid.

The protein resides in the membrane. Its subcellular location is the cell junction. The protein localises to the adherens junction. Regulates cell junction organization in epithelial cells. May play a role in the transition from adherens junction to tight junction assembly. May regulate F-actin polymerization required for tight junctional localization dynamics and affect the junctional localization of PARD6B. During podocyte differentiation may negatively regulate activity of FYN and subsequently the abundance of nephrin. This Homo sapiens (Human) protein is Transmembrane protein 47 (TMEM47).